Reading from the N-terminus, the 61-residue chain is Temporin-CG3 (61 aa).

The N-terminal stretch at M1 to C22 is a signal peptide. A propeptide spans E23–E44 (removed in mature form).

Belongs to the frog skin active peptide (FSAP) family. Temporin subfamily. Expressed by the skin glands.

The protein resides in the secreted. Its function is as follows. Antimicrobial peptide active against a variety of Gram-positive bacterial strains but not against Gram-negative bacteria. Has weak antifungal activity against a slime mold isolate. Has weak hemolytic activity against human erythrocytes. In Amolops chunganensis (Chungan torrent frog), this protein is Temporin-CG3.